Reading from the N-terminus, the 436-residue chain is Elongation factor 1-alpha (436 aa).

Residues 8–232 form the tr-type G domain; it reads KPHLNMIVTG…DDFKMAEKPV (225 aa). The G1 stretch occupies residues 17–24; sequence GHIDNGKS. A GTP-binding site is contributed by 17–24; the sequence is GHIDNGKS. Serine 24 lines the Mg(2+) pocket. Residues 74 to 78 form a G2 region; sequence GITID. Residues 95–98 form a G3 region; that stretch reads DAPG. Residues 95 to 99 and 157 to 160 each bind GTP; these read DAPGH and NKMD. The interval 157–160 is G4; sequence NKMD. The segment at 196 to 198 is G5; that stretch reads SGW.

Belongs to the TRAFAC class translation factor GTPase superfamily. Classic translation factor GTPase family. EF-Tu/EF-1A subfamily.

Its subcellular location is the cytoplasm. The catalysed reaction is GTP + H2O = GDP + phosphate + H(+). GTP hydrolase that promotes the GTP-dependent binding of aminoacyl-tRNA to the A-site of ribosomes during protein biosynthesis. This chain is Elongation factor 1-alpha, found in Cenarchaeum symbiosum (strain A).